The sequence spans 174 residues: Ribosome maturation factor RimM (174 aa).

In terms of domain architecture, PRC barrel spans 98–171 (EGEFYFHQII…TIHIEVMEGL (74 aa)).

It belongs to the RimM family. As to quaternary structure, binds ribosomal protein uS19.

It localises to the cytoplasm. Its function is as follows. An accessory protein needed during the final step in the assembly of 30S ribosomal subunit, possibly for assembly of the head region. Essential for efficient processing of 16S rRNA. May be needed both before and after RbfA during the maturation of 16S rRNA. It has affinity for free ribosomal 30S subunits but not for 70S ribosomes. The sequence is that of Ribosome maturation factor RimM from Bacillus pumilus (strain SAFR-032).